The chain runs to 570 residues: Protein FAM227A (570 aa).

The span at 87-99 (LREKTRSSPEDKV) shows a compositional bias: basic and acidic residues. Disordered stretches follow at residues 87–112 (LREK…CKGS), 336–374 (PAQS…QNTA), and 519–570 (KAAD…TSKP). At Tyr343 the chain carries Phosphotyrosine. A compositionally biased stretch (polar residues) spans 345 to 362 (PQSSSANSPSEKTSSAKQ). Residues Ser348 and Ser349 each carry the phosphoserine modification. Composition is skewed to basic and acidic residues over residues 363–374 (NSEKSLRMQNTA) and 540–562 (SPDK…EVEH).

This sequence belongs to the FAM227 family.

The sequence is that of Protein FAM227A (FAM227A) from Homo sapiens (Human).